Reading from the N-terminus, the 146-residue chain is uncharacterized protein (146 aa).

This is an uncharacterized protein from Methanothermobacter thermautotrophicus (Methanobacterium thermoformicicum).